The chain runs to 130 residues: Small ribosomal subunit protein uS8 (130 aa).

This sequence belongs to the universal ribosomal protein uS8 family. Part of the 30S ribosomal subunit. Contacts proteins S5 and S12.

One of the primary rRNA binding proteins, it binds directly to 16S rRNA central domain where it helps coordinate assembly of the platform of the 30S subunit. The chain is Small ribosomal subunit protein uS8 from Actinobacillus succinogenes (strain ATCC 55618 / DSM 22257 / CCUG 43843 / 130Z).